Reading from the N-terminus, the 382-residue chain is ATP phosphoribosyltransferase regulatory subunit (382 aa).

Belongs to the class-II aminoacyl-tRNA synthetase family. HisZ subfamily. As to quaternary structure, heteromultimer composed of HisG and HisZ subunits.

The protein resides in the cytoplasm. Its pathway is amino-acid biosynthesis; L-histidine biosynthesis; L-histidine from 5-phospho-alpha-D-ribose 1-diphosphate: step 1/9. In terms of biological role, required for the first step of histidine biosynthesis. May allow the feedback regulation of ATP phosphoribosyltransferase activity by histidine. The chain is ATP phosphoribosyltransferase regulatory subunit from Verminephrobacter eiseniae (strain EF01-2).